Here is a 237-residue protein sequence, read N- to C-terminus: Pyridoxal 5'-phosphate synthase subunit PdxS (237 aa).

The Schiff-base intermediate with D-ribose 5-phosphate role is filled by Lys-19. Gly-91 contributes to the D-ribose 5-phosphate binding site. Arg-103 is a D-glyceraldehyde 3-phosphate binding site. Residues Gly-157 and 178 to 179 (GS) contribute to the D-ribose 5-phosphate site.

This sequence belongs to the PdxS/SNZ family. In the presence of PdxT, forms a dodecamer of heterodimers.

It catalyses the reaction aldehydo-D-ribose 5-phosphate + D-glyceraldehyde 3-phosphate + L-glutamine = pyridoxal 5'-phosphate + L-glutamate + phosphate + 3 H2O + H(+). It participates in cofactor biosynthesis; pyridoxal 5'-phosphate biosynthesis. In terms of biological role, catalyzes the formation of pyridoxal 5'-phosphate from ribose 5-phosphate (RBP), glyceraldehyde 3-phosphate (G3P) and ammonia. The ammonia is provided by the PdxT subunit. Can also use ribulose 5-phosphate and dihydroxyacetone phosphate as substrates, resulting from enzyme-catalyzed isomerization of RBP and G3P, respectively. The chain is Pyridoxal 5'-phosphate synthase subunit PdxS from Methanococcus vannielii.